Consider the following 129-residue polypeptide: Large ribosomal subunit protein bL17 (129 aa).

The protein belongs to the bacterial ribosomal protein bL17 family. Part of the 50S ribosomal subunit. Contacts protein L32.

The protein is Large ribosomal subunit protein bL17 of Acidovorax ebreus (strain TPSY) (Diaphorobacter sp. (strain TPSY)).